We begin with the raw amino-acid sequence, 535 residues long: CTP synthase (535 aa).

An amidoligase domain region spans residues 1–267 (MTKYIFVTGG…DQIVLDHFGV (267 aa)). Residue Ser13 participates in CTP binding. Residue Ser13 participates in UTP binding. Position 14-19 (14-19 (SLGKGI)) interacts with ATP. Tyr54 provides a ligand contact to L-glutamine. Asp71 contributes to the ATP binding site. Residues Asp71 and Glu141 each coordinate Mg(2+). CTP is bound by residues 148–150 (DIE), 188–193 (KTKPTQ), and Lys224. Residues 188 to 193 (KTKPTQ) and Lys224 contribute to the UTP site. The Glutamine amidotransferase type-1 domain occupies 292 to 535 (KIALVGKYVA…VAAASREVKD (244 aa)). Gly354 contacts L-glutamine. Cys381 acts as the Nucleophile; for glutamine hydrolysis in catalysis. Residues 382 to 385 (LGMQ), Glu405, and Arg463 contribute to the L-glutamine site. Residues His508 and Glu510 contribute to the active site.

Belongs to the CTP synthase family. As to quaternary structure, homotetramer.

It carries out the reaction UTP + L-glutamine + ATP + H2O = CTP + L-glutamate + ADP + phosphate + 2 H(+). It catalyses the reaction L-glutamine + H2O = L-glutamate + NH4(+). The catalysed reaction is UTP + NH4(+) + ATP = CTP + ADP + phosphate + 2 H(+). It functions in the pathway pyrimidine metabolism; CTP biosynthesis via de novo pathway; CTP from UDP: step 2/2. Its activity is regulated as follows. Allosterically activated by GTP, when glutamine is the substrate; GTP has no effect on the reaction when ammonia is the substrate. The allosteric effector GTP functions by stabilizing the protein conformation that binds the tetrahedral intermediate(s) formed during glutamine hydrolysis. Inhibited by the product CTP, via allosteric rather than competitive inhibition. Functionally, catalyzes the ATP-dependent amination of UTP to CTP with either L-glutamine or ammonia as the source of nitrogen. Regulates intracellular CTP levels through interactions with the four ribonucleotide triphosphates. This chain is CTP synthase, found in Levilactobacillus brevis (strain ATCC 367 / BCRC 12310 / CIP 105137 / JCM 1170 / LMG 11437 / NCIMB 947 / NCTC 947) (Lactobacillus brevis).